We begin with the raw amino-acid sequence, 138 residues long: Urease subunit beta (138 aa).

The disordered stretch occupies residues 115–138; it reads RMRAAGFGDTGEAAPDDGDTESDQ. Acidic residues predominate over residues 128-138; the sequence is APDDGDTESDQ.

This sequence belongs to the urease beta subunit family. As to quaternary structure, heterotrimer of UreA (gamma), UreB (beta) and UreC (alpha) subunits. Three heterotrimers associate to form the active enzyme.

It localises to the cytoplasm. The enzyme catalyses urea + 2 H2O + H(+) = hydrogencarbonate + 2 NH4(+). It functions in the pathway nitrogen metabolism; urea degradation; CO(2) and NH(3) from urea (urease route): step 1/1. This chain is Urease subunit beta, found in Haloarcula marismortui (strain ATCC 43049 / DSM 3752 / JCM 8966 / VKM B-1809) (Halobacterium marismortui).